Consider the following 127-residue polypeptide: UPF0102 protein Reut_A3265 (127 aa).

Belongs to the UPF0102 family.

The protein is UPF0102 protein Reut_A3265 of Cupriavidus pinatubonensis (strain JMP 134 / LMG 1197) (Cupriavidus necator (strain JMP 134)).